Consider the following 185-residue polypeptide: Ribosome-recycling factor (185 aa).

It belongs to the RRF family.

Its subcellular location is the cytoplasm. Its function is as follows. Responsible for the release of ribosomes from messenger RNA at the termination of protein biosynthesis. May increase the efficiency of translation by recycling ribosomes from one round of translation to another. This Shewanella amazonensis (strain ATCC BAA-1098 / SB2B) protein is Ribosome-recycling factor.